We begin with the raw amino-acid sequence, 421 residues long: 3-phosphoshikimate 1-carboxyvinyltransferase (421 aa).

3-phosphoshikimate-binding residues include lysine 21, serine 22, and arginine 26. Lysine 21 serves as a coordination point for phosphoenolpyruvate. Residues glycine 93 and arginine 121 each contribute to the phosphoenolpyruvate site. Residues serine 166, serine 167, glutamine 168, serine 194, aspartate 310, and lysine 337 each coordinate 3-phosphoshikimate. Position 168 (glutamine 168) interacts with phosphoenolpyruvate. Residue aspartate 310 is the Proton acceptor of the active site. Phosphoenolpyruvate-binding residues include arginine 341, arginine 382, and lysine 407.

Belongs to the EPSP synthase family. As to quaternary structure, monomer.

The protein localises to the cytoplasm. It catalyses the reaction 3-phosphoshikimate + phosphoenolpyruvate = 5-O-(1-carboxyvinyl)-3-phosphoshikimate + phosphate. It participates in metabolic intermediate biosynthesis; chorismate biosynthesis. Functionally, catalyzes the transfer of the enolpyruvyl moiety of phosphoenolpyruvate (PEP) to the 5-hydroxyl of shikimate-3-phosphate (S3P) to produce enolpyruvyl shikimate-3-phosphate and inorganic phosphate. This Methanoregula boonei (strain DSM 21154 / JCM 14090 / 6A8) protein is 3-phosphoshikimate 1-carboxyvinyltransferase.